Reading from the N-terminus, the 92-residue chain is Small ribosomal subunit protein uS19 (92 aa).

This sequence belongs to the universal ribosomal protein uS19 family.

Its function is as follows. Protein S19 forms a complex with S13 that binds strongly to the 16S ribosomal RNA. The protein is Small ribosomal subunit protein uS19 of Desulfatibacillum aliphaticivorans.